The sequence spans 114 residues: uncharacterized protein (114 aa).

Its subcellular location is the mitochondrion. This is an uncharacterized protein from Arabidopsis thaliana (Mouse-ear cress).